The sequence spans 272 residues: Proteasome subunit beta type-5 (272 aa).

Residues 1–62 (MINIDFDNIE…APKALEFAHG (62 aa)) constitute a propeptide, removed in mature form. Threonine 63 serves as the catalytic Nucleophile.

This sequence belongs to the peptidase T1B family. The 26S proteasome consists of a 20S proteasome core and two 19S regulatory subunits. The 20S proteasome core is composed of 28 subunits that are arranged in four stacked rings, resulting in a barrel-shaped structure. The two end rings are each formed by seven alpha subunits, and the two central rings are each formed by seven beta subunits. The catalytic chamber with the active sites is on the inside of the barrel.

The protein resides in the cytoplasm. It is found in the nucleus. It carries out the reaction Cleavage of peptide bonds with very broad specificity.. In terms of biological role, the proteasome is a multicatalytic proteinase complex which is characterized by its ability to cleave peptides with Arg, Phe, Tyr, Leu, and Glu adjacent to the leaving group at neutral or slightly basic pH. The proteasome has an ATP-dependent proteolytic activity. This is Proteasome subunit beta type-5 (psmB5) from Dictyostelium discoideum (Social amoeba).